The following is a 498-amino-acid chain: ATP synthase subunit beta, chloroplastic (498 aa).

172 to 179 provides a ligand contact to ATP; the sequence is GGAGVGKT.

This sequence belongs to the ATPase alpha/beta chains family. As to quaternary structure, F-type ATPases have 2 components, CF(1) - the catalytic core - and CF(0) - the membrane proton channel. CF(1) has five subunits: alpha(3), beta(3), gamma(1), delta(1), epsilon(1). CF(0) has four main subunits: a(1), b(1), b'(1) and c(9-12).

The protein resides in the plastid. It localises to the chloroplast thylakoid membrane. The catalysed reaction is ATP + H2O + 4 H(+)(in) = ADP + phosphate + 5 H(+)(out). Functionally, produces ATP from ADP in the presence of a proton gradient across the membrane. The catalytic sites are hosted primarily by the beta subunits. The chain is ATP synthase subunit beta, chloroplastic from Castanea sativa (Sweet chestnut).